A 593-amino-acid polypeptide reads, in one-letter code: Arylsulfatase D (593 aa).

An N-terminal signal peptide occupies residues 1 to 33 (MRSAARRGRAAPAARDSLPVLLFLCLLLKTCEP). Positions 49 and 50 each coordinate Ca(2+). A glycan (N-linked (GlcNAc...) asparagine) is linked at asparagine 61. Residue cysteine 89 coordinates Ca(2+). The active-site Nucleophile is cysteine 89. A 3-oxoalanine (Cys) modification is found at cysteine 89. N-linked (GlcNAc...) asparagine glycosylation occurs at asparagine 128. Residue lysine 148 participates in substrate binding. The active site involves histidine 150. Position 304 (histidine 304) interacts with substrate. Residue asparagine 347 is glycosylated (N-linked (GlcNAc...) asparagine). Ca(2+)-binding residues include aspartate 356 and histidine 357. Lysine 381 contacts substrate.

The protein belongs to the sulfatase family. Ca(2+) is required as a cofactor. In terms of processing, the conversion to 3-oxoalanine (also known as C-formylglycine, FGly), of a serine or cysteine residue in prokaryotes and of a cysteine residue in eukaryotes, is critical for catalytic activity. In terms of tissue distribution, expressed in the pancreas, kidney, liver, lung, placenta, brain and heart.

The protein resides in the lysosome. The protein is Arylsulfatase D (ARSD) of Homo sapiens (Human).